We begin with the raw amino-acid sequence, 732 residues long: Copper-transporting ATPase (732 aa).

Topologically, residues methionine 1–lysine 88 are cytoplasmic. The HMA domain occupies threonine 2–arginine 68. Cu(+) contacts are provided by cysteine 13 and cysteine 16. Residues leucine 89–leucine 109 form a helical membrane-spanning segment. The Extracellular portion of the chain corresponds to proline 110–glycine 122. Residues isoleucine 123–histidine 142 form a helical membrane-spanning segment. Residues glycine 143–alanine 149 are Cytoplasmic-facing. A helical membrane pass occupies residues arginine 150–leucine 170. Residues valine 171–phenylalanine 187 lie on the Extracellular side of the membrane. The chain crosses the membrane as a helical span at residues glutamate 188 to lysine 208. Residues aspartate 209–lysine 336 are Cytoplasmic-facing. Residues valine 337–leucine 359 traverse the membrane as a helical segment. The Extracellular segment spans residues glycine 360–alanine 365. The chain crosses the membrane as a helical span at residues leucine 366–leucine 383. Residues alanine 384–isoleucine 663 lie on the Cytoplasmic side of the membrane. Residue aspartate 421 is the 4-aspartylphosphate intermediate of the active site. Mg(2+)-binding residues include aspartate 609 and aspartate 613. A helical transmembrane segment spans residues lysine 664–glycine 683. Residues valine 684 to proline 694 are Extracellular-facing. A helical membrane pass occupies residues methionine 695–glutamine 713. Residues arginine 714–serine 732 are Cytoplasmic-facing.

Belongs to the cation transport ATPase (P-type) (TC 3.A.3) family. Type IB subfamily.

Its subcellular location is the cell membrane. It catalyses the reaction Cu(+)(in) + ATP + H2O = Cu(+)(out) + ADP + phosphate + H(+). Functionally, probably involved in copper export. The sequence is that of Copper-transporting ATPase (copA) from Helicobacter felis (strain ATCC 49179 / CCUG 28539 / NCTC 12436 / CS1).